A 114-amino-acid polypeptide reads, in one-letter code: Iron-sulfur cluster insertion protein ErpA (114 aa).

Iron-sulfur cluster-binding residues include Cys42, Cys106, and Cys108.

It belongs to the HesB/IscA family. In terms of assembly, homodimer. Iron-sulfur cluster serves as cofactor.

Its function is as follows. Required for insertion of 4Fe-4S clusters for at least IspG. The chain is Iron-sulfur cluster insertion protein ErpA from Buchnera aphidicola subsp. Acyrthosiphon pisum (strain APS) (Acyrthosiphon pisum symbiotic bacterium).